Reading from the N-terminus, the 958-residue chain is SLIT and NTRK-like protein 5 (958 aa).

The signal sequence occupies residues 1 to 40 (MHTCCPPVTLEQDLHRKMHSWMLQTLAFAVTSLVLSCAET). Topologically, residues 41–664 (IDYYGEICDN…GGGASSVPLS (624 aa)) are extracellular. LRR repeat units follow at residues 82–103 (PIYH…EFVN), 106–127 (GASI…AFHG), 130–151 (GLRR…TFLG), 154–175 (NLEY…AFGK), 178–199 (LLQV…LFRF), and 201–222 (PLTH…GLLQ). Asn103 carries an N-linked (GlcNAc...) asparagine glycan. The region spanning 235-286 (NPWNCSCELISLKDWLDSISYSALVGDVVCETPFRLHGRDLDEVSKQELCPR) is the LRRCT 1 domain. The tract at residues 317–358 (ATSSSAVYKPPLKPPKGTRQPNKPRVRPTSRQPSKDLGYSNY) is disordered. The 43-residue stretch at 365-407 (QTKSPVPLECPTACSCNLQISDLGLNVNCQERKIESIAELQPK) folds into the LRRNT domain. LRR repeat units lie at residues 410–431 (NPKK…DFLE), 434–455 (GLDL…AFGD), 458–479 (NLRR…LFYG), 482–503 (SLQY…TFDP), 506–527 (NLQL…VFSG), and 529–550 (TLLR…GVLD). Residues 563–614 (NPWDCTCDIVGMKLWVEQLKVGVLVDEVICKAPKKFAETDMRSIKSELLCPD) enclose the LRRCT 2 domain. A glycan (N-linked (GlcNAc...) asparagine) is linked at Asn644. Residues 665–685 (VLILSLLLVFIMSVFVAAGLF) form a helical membrane-spanning segment. The Cytoplasmic portion of the chain corresponds to 686–958 (VLVMKRRKKN…LEKQTTFSQF (273 aa)). Positions 789 to 844 (NHHLQQQQQPPPPPQQPQQQPPPQLQLQPGEEERRESHHLRSPAYSVSTIEPREDL) are disordered. Positions 797–812 (QPPPPPQQPQQQPPPQ) are enriched in pro residues.

This sequence belongs to the SLITRK family. In terms of tissue distribution, expressed predominantly in the cerebral cortex of the brain but also at low levels in the spinal cord and medulla.

It is found in the membrane. In terms of biological role, suppresses neurite outgrowth. The sequence is that of SLIT and NTRK-like protein 5 (SLITRK5) from Homo sapiens (Human).